The following is a 691-amino-acid chain: Cyclic nucleotide-gated channel alpha-1 (691 aa).

Over 1–168 (MKKNIINTWY…PAGNMYYNWL (168 aa)) the chain is Cytoplasmic. A disordered region spans residues 31 to 151 (ENGARSSFSD…KGKDKKEEEK (121 aa)). A compositionally biased stretch (acidic residues) spans 39–56 (SDDDGDDDSASMFEESEN). 2 stretches are compositionally biased toward basic and acidic residues: residues 57–76 (ETPHARDSCRNNSQRRDPSQ) and 112–151 (SKSGDKNENKKDSEKKKKKEKEKEKKNKEEKGKDKKEEEK). The chain crosses the membrane as a helical span at residues 169 to 190 (FCITLPVMYNWTMVIARACFDE). Over 191-200 (LQSDYLEYWI) the chain is Extracellular. Residues 201 to 221 (IFDYLSDIVYLLDMFVRTRTG) traverse the membrane as a helical segment. Residues 222–246 (YLEQGLLVREEAKLIEKYKSNLQFK) are Cytoplasmic-facing. The chain crosses the membrane as a helical span at residues 247-265 (LDFLSVIPTDLLYFKLGWN). Residues 266–270 (YPEIR) are Extracellular-facing. A helical transmembrane segment spans residues 271-289 (LNRLLRISRMFEFFQRTET). Topologically, residues 290–296 (RTNYPNI) are cytoplasmic. An ion conduction pathway region spans residues 294-402 (PNIFRISNLV…GNIGSMISNM (109 aa)). A helical transmembrane segment spans residues 297 to 320 (FRISNLVMYIVIIIHWNACVYFSI). The Extracellular segment spans residues 321–343 (SKAIGFGNDTWVYPDVNDPEFGR). The N-linked (GlcNAc...) asparagine glycan is linked to asparagine 328. 2 helical membrane-spanning segments follow: residues 344-378 (LARKYVYSLYWSTLTLTTIGETPPPVRDSEYVFVV) and 379-403 (VDFLIGVLIFATIVGNIGSMISNMN). The interval 361 to 364 (TIGE) is selectivity filter. Residues 404-480 (AARAEFQARI…DTLKKVRIFA (77 aa)) form a C-linker region. The Cytoplasmic portion of the chain corresponds to 404–691 (AARAEFQARI…ESRPLDSTQD (288 aa)). Positions 484 to 604 (AGLLVELVLK…EEKGKQILMK (121 aa)) are cyclic nucleotide-binding domain. 3',5'-cyclic GMP-binding residues include glycine 544, serine 547, arginine 560, and threonine 561. 3',5'-cyclic AMP-binding residues include arginine 560 and threonine 561. The stretch at 622 to 676 (LEEKVTRMEGSVDLLQTRFARILAEYESMQQKLKQRLTKVERFLKPIIDTEFSAL) forms a coiled coil.

This sequence belongs to the cyclic nucleotide-gated cation channel (TC 1.A.1.5) family. CNGA1 subfamily. In terms of assembly, forms heterotetrameric channels composed of CNGA1 and CNGB1 subunits with 3:1 stoichiometry. May also form cyclic nucleotide-activated homotetrameric channels, that are efficiently activated by saturating cGMP, but poorly activated by saturating cAMP compared to the heterotetramer with CNGB1. The channel binds Ca(2+)-bound CALM1 via CaM1 and CaM2 regions of the CNGB1 subunit; this interaction modulates the affinity of the channel for cNMPs in response to intracellular Ca(2+) levels.

The protein resides in the cell membrane. The catalysed reaction is Ca(2+)(in) = Ca(2+)(out). It carries out the reaction Na(+)(in) = Na(+)(out). The enzyme catalyses K(+)(in) = K(+)(out). It catalyses the reaction NH4(+)(in) = NH4(+)(out). The catalysed reaction is Rb(+)(in) = Rb(+)(out). It carries out the reaction Li(+)(in) = Li(+)(out). The enzyme catalyses Cs(+)(in) = Cs(+)(out). In terms of biological role, pore-forming subunit of the rod cyclic nucleotide-gated channel. Mediates rod photoresponses at dim light converting transient changes in intracellular cGMP levels into electrical signals. In the dark, cGMP levels are high and keep the channel open enabling a steady inward current carried by Na(+) and Ca(2+) ions that leads to membrane depolarization and neurotransmitter release from synaptic terminals. Upon photon absorption cGMP levels decline leading to channel closure and membrane hyperpolarization that ultimately slows neurotransmitter release and signals the presence of light, the end point of the phototransduction cascade. Conducts cGMP- and cAMP-gated ion currents, with permeability for monovalent and divalent cations. The selectivity for Ca(2+) over Na(+) increases with cGMP concentrations, whereas the selectivity among monovalent ions is independent of the cGMP levels. This chain is Cyclic nucleotide-gated channel alpha-1, found in Canis lupus familiaris (Dog).